A 247-amino-acid chain; its full sequence is Adenosylcobinamide-GDP ribazoletransferase (247 aa).

4 consecutive transmembrane segments (helical) span residues 34–54, 59–79, 113–133, and 194–214; these read IITF…VFMV, CGVP…TGGF, GGLA…ELAL, and VLLP…AIFI.

Belongs to the CobS family. The cofactor is Mg(2+).

Its subcellular location is the cell inner membrane. It catalyses the reaction alpha-ribazole + adenosylcob(III)inamide-GDP = adenosylcob(III)alamin + GMP + H(+). The catalysed reaction is alpha-ribazole 5'-phosphate + adenosylcob(III)inamide-GDP = adenosylcob(III)alamin 5'-phosphate + GMP + H(+). It functions in the pathway cofactor biosynthesis; adenosylcobalamin biosynthesis; adenosylcobalamin from cob(II)yrinate a,c-diamide: step 7/7. Its function is as follows. Joins adenosylcobinamide-GDP and alpha-ribazole to generate adenosylcobalamin (Ado-cobalamin). Also synthesizes adenosylcobalamin 5'-phosphate from adenosylcobinamide-GDP and alpha-ribazole 5'-phosphate. In Escherichia coli (strain ATCC 8739 / DSM 1576 / NBRC 3972 / NCIMB 8545 / WDCM 00012 / Crooks), this protein is Adenosylcobinamide-GDP ribazoletransferase.